The following is a 257-amino-acid chain: Diphthine synthase (257 aa).

S-adenosyl-L-methionine is bound by residues I11, D89, I92, 117 to 118 (SV), L169, L210, and H235.

Belongs to the diphthine synthase family. In terms of assembly, homodimer.

The catalysed reaction is 2-[(3S)-amino-3-carboxypropyl]-L-histidyl-[translation elongation factor 2] + 3 S-adenosyl-L-methionine = diphthine-[translation elongation factor 2] + 3 S-adenosyl-L-homocysteine + 3 H(+). It functions in the pathway protein modification; peptidyl-diphthamide biosynthesis. S-adenosyl-L-methionine-dependent methyltransferase that catalyzes the trimethylation of the amino group of the modified target histidine residue in translation elongation factor 2 (EF-2), to form an intermediate called diphthine. The three successive methylation reactions represent the second step of diphthamide biosynthesis. The protein is Diphthine synthase of Saccharolobus islandicus (strain L.S.2.15 / Lassen #1) (Sulfolobus islandicus).